Here is a 247-residue protein sequence, read N- to C-terminus: Aliphatic sulfonates import ATP-binding protein SsuB 3 (247 aa).

The ABC transporter domain occupies 28-242 (VSVRGLQRRY…ALRSILLEEL (215 aa)). 60 to 67 (GESGCGKT) is a binding site for ATP.

This sequence belongs to the ABC transporter superfamily. Aliphatic sulfonates importer (TC 3.A.1.17.2) family. In terms of assembly, the complex is composed of two ATP-binding proteins (SsuB), two transmembrane proteins (SsuC) and a solute-binding protein (SsuA).

It is found in the cell inner membrane. The catalysed reaction is ATP + H2O + aliphatic sulfonate-[sulfonate-binding protein]Side 1 = ADP + phosphate + aliphatic sulfonateSide 2 + [sulfonate-binding protein]Side 1.. In terms of biological role, part of the ABC transporter complex SsuABC involved in aliphatic sulfonates import. Responsible for energy coupling to the transport system. This Paraburkholderia xenovorans (strain LB400) protein is Aliphatic sulfonates import ATP-binding protein SsuB 3.